A 493-amino-acid polypeptide reads, in one-letter code: Ketol-acid reductoisomerase (NADP(+)) (493 aa).

Residues 15-208 (AQLGKCRFMQ…GGDRAGVLES (194 aa)) form the KARI N-terminal Rossmann domain. Residues 45-48 (CGAQ), R68, R76, S78, and 108-110 (DKQ) each bind NADP(+). H132 is an active-site residue. NADP(+) is bound at residue G158. 2 consecutive KARI C-terminal knotted domains span residues 209–344 (SFVA…NALA) and 345–486 (FAGK…MKDM). Positions 217, 221, 389, and 393 each coordinate Mg(2+). S414 contacts substrate.

This sequence belongs to the ketol-acid reductoisomerase family. The cofactor is Mg(2+).

It catalyses the reaction (2R)-2,3-dihydroxy-3-methylbutanoate + NADP(+) = (2S)-2-acetolactate + NADPH + H(+). The catalysed reaction is (2R,3R)-2,3-dihydroxy-3-methylpentanoate + NADP(+) = (S)-2-ethyl-2-hydroxy-3-oxobutanoate + NADPH + H(+). It participates in amino-acid biosynthesis; L-isoleucine biosynthesis; L-isoleucine from 2-oxobutanoate: step 2/4. It functions in the pathway amino-acid biosynthesis; L-valine biosynthesis; L-valine from pyruvate: step 2/4. Its function is as follows. Involved in the biosynthesis of branched-chain amino acids (BCAA). Catalyzes an alkyl-migration followed by a ketol-acid reduction of (S)-2-acetolactate (S2AL) to yield (R)-2,3-dihydroxy-isovalerate. In the isomerase reaction, S2AL is rearranged via a Mg-dependent methyl migration to produce 3-hydroxy-3-methyl-2-ketobutyrate (HMKB). In the reductase reaction, this 2-ketoacid undergoes a metal-dependent reduction by NADPH to yield (R)-2,3-dihydroxy-isovalerate. This chain is Ketol-acid reductoisomerase (NADP(+)), found in Aeromonas salmonicida (strain A449).